A 1040-amino-acid polypeptide reads, in one-letter code: Multidrug resistance protein MdtB (1040 aa).

The next 12 helical transmembrane spans lie at 16–36, 347–367, 369–389, 396–416, 440–460, 472–492, 537–557, 863–883, 888–908, 911–931, 968–988, and 998–1018; these read FIMR…AGII, LMMA…NIPA, IIPG…MVFL, LTLM…IVVI, IGFT…PLLF, FAIT…TLTP, WLTL…WVFI, LGST…VLGI, FIHP…ALLA, IAGS…IGIV, ILMT…STGV, and IGMV…TPVI.

This sequence belongs to the resistance-nodulation-cell division (RND) (TC 2.A.6) family. MdtB subfamily. As to quaternary structure, part of a tripartite efflux system composed of MdtA, MdtB and MdtC. MdtB forms a heteromultimer with MdtC.

It is found in the cell inner membrane. The MdtABC tripartite complex confers resistance against novobiocin and deoxycholate. The sequence is that of Multidrug resistance protein MdtB from Escherichia fergusonii (strain ATCC 35469 / DSM 13698 / CCUG 18766 / IAM 14443 / JCM 21226 / LMG 7866 / NBRC 102419 / NCTC 12128 / CDC 0568-73).